Consider the following 185-residue polypeptide: Large ribosomal subunit protein uL5 (185 aa).

The protein belongs to the universal ribosomal protein uL5 family. As to quaternary structure, part of the 50S ribosomal subunit; part of the 5S rRNA/L5/L18/L25 subcomplex. Contacts the 5S rRNA and the P site tRNA. Forms a bridge to the 30S subunit in the 70S ribosome.

Functionally, this is one of the proteins that bind and probably mediate the attachment of the 5S RNA into the large ribosomal subunit, where it forms part of the central protuberance. In the 70S ribosome it contacts protein S13 of the 30S subunit (bridge B1b), connecting the 2 subunits; this bridge is implicated in subunit movement. Contacts the P site tRNA; the 5S rRNA and some of its associated proteins might help stabilize positioning of ribosome-bound tRNAs. In Rhizobium etli (strain CIAT 652), this protein is Large ribosomal subunit protein uL5.